The sequence spans 436 residues: Histidine--tRNA ligase (436 aa).

Belongs to the class-II aminoacyl-tRNA synthetase family. In terms of assembly, homodimer.

The protein resides in the cytoplasm. The enzyme catalyses tRNA(His) + L-histidine + ATP = L-histidyl-tRNA(His) + AMP + diphosphate + H(+). This is Histidine--tRNA ligase from Psychrobacter sp. (strain PRwf-1).